Reading from the N-terminus, the 142-residue chain is Transcription antitermination protein NusB (142 aa).

This sequence belongs to the NusB family.

Its function is as follows. Involved in transcription antitermination. Required for transcription of ribosomal RNA (rRNA) genes. Binds specifically to the boxA antiterminator sequence of the ribosomal RNA (rrn) operons. The polypeptide is Transcription antitermination protein NusB (Trichlorobacter lovleyi (strain ATCC BAA-1151 / DSM 17278 / SZ) (Geobacter lovleyi)).